A 116-amino-acid chain; its full sequence is S-adenosylmethionine decarboxylase proenzyme (116 aa).

Catalysis depends on Ser-63, which acts as the Schiff-base intermediate with substrate; via pyruvic acid. At Ser-63 the chain carries Pyruvic acid (Ser); by autocatalysis. His-68 acts as the Proton acceptor; for processing activity in catalysis. Residue Cys-83 is the Proton donor; for catalytic activity of the active site.

This sequence belongs to the prokaryotic AdoMetDC family. Type 1 subfamily. As to quaternary structure, heterotetramer of two alpha and two beta chains arranged as a dimer of alpha/beta heterodimers. Pyruvate serves as cofactor. Post-translationally, is synthesized initially as an inactive proenzyme. Formation of the active enzyme involves a self-maturation process in which the active site pyruvoyl group is generated from an internal serine residue via an autocatalytic post-translational modification. Two non-identical subunits are generated from the proenzyme in this reaction, and the pyruvate is formed at the N-terminus of the alpha chain, which is derived from the carboxyl end of the proenzyme. The post-translation cleavage follows an unusual pathway, termed non-hydrolytic serinolysis, in which the side chain hydroxyl group of the serine supplies its oxygen atom to form the C-terminus of the beta chain, while the remainder of the serine residue undergoes an oxidative deamination to produce ammonia and the pyruvoyl group blocking the N-terminus of the alpha chain.

The enzyme catalyses S-adenosyl-L-methionine + H(+) = S-adenosyl 3-(methylsulfanyl)propylamine + CO2. It participates in amine and polyamine biosynthesis; S-adenosylmethioninamine biosynthesis; S-adenosylmethioninamine from S-adenosyl-L-methionine: step 1/1. Its function is as follows. Catalyzes the decarboxylation of S-adenosylmethionine to S-adenosylmethioninamine (dcAdoMet), the propylamine donor required for the synthesis of the polyamines spermine and spermidine from the diamine putrescine. The chain is S-adenosylmethionine decarboxylase proenzyme from Clostridium botulinum (strain ATCC 19397 / Type A).